The chain runs to 358 residues: Alanine racemase (358 aa).

The active-site Proton acceptor; specific for D-alanine is Lys35. The residue at position 35 (Lys35) is an N6-(pyridoxal phosphate)lysine. Position 130 (Arg130) interacts with substrate. The Proton acceptor; specific for L-alanine role is filled by Tyr255. Residue Met303 coordinates substrate.

Belongs to the alanine racemase family. Requires pyridoxal 5'-phosphate as cofactor.

It carries out the reaction L-alanine = D-alanine. It functions in the pathway amino-acid biosynthesis; D-alanine biosynthesis; D-alanine from L-alanine: step 1/1. In terms of biological role, catalyzes the interconversion of L-alanine and D-alanine. May also act on other amino acids. This Shewanella baltica (strain OS185) protein is Alanine racemase (alr).